Consider the following 95-residue polypeptide: Putative regulatory protein Daud_1598 (95 aa).

Belongs to the RemA family.

The sequence is that of Putative regulatory protein Daud_1598 from Desulforudis audaxviator (strain MP104C).